The following is a 239-amino-acid chain: Octanoyltransferase (239 aa).

The region spanning 48–236 (EGGDELVWLV…AFETVFGETV (189 aa)) is the BPL/LPL catalytic domain. Substrate is bound by residues 87–94 (RGGEYTYH), 167–169 (ALG), and 180–182 (GLS). Cys198 acts as the Acyl-thioester intermediate in catalysis.

This sequence belongs to the LipB family.

The protein localises to the cytoplasm. It carries out the reaction octanoyl-[ACP] + L-lysyl-[protein] = N(6)-octanoyl-L-lysyl-[protein] + holo-[ACP] + H(+). The protein operates within protein modification; protein lipoylation via endogenous pathway; protein N(6)-(lipoyl)lysine from octanoyl-[acyl-carrier-protein]: step 1/2. In terms of biological role, catalyzes the transfer of endogenously produced octanoic acid from octanoyl-acyl-carrier-protein onto the lipoyl domains of lipoate-dependent enzymes. Lipoyl-ACP can also act as a substrate although octanoyl-ACP is likely to be the physiological substrate. In Rhizobium etli (strain CIAT 652), this protein is Octanoyltransferase.